We begin with the raw amino-acid sequence, 186 residues long: Mitochondrial import inner membrane translocase subunit Tim22 (186 aa).

2 cysteine pairs are disulfide-bonded: C61/C133 and C152/C171. The next 3 helical transmembrane spans lie at 66–86 (ALAC…TAGI), 117–135 (YAKN…ECLV), and 162–182 (AGLK…AVID).

It belongs to the Tim17/Tim22/Tim23 family. As to quaternary structure, core component of the TIM22 complex.

The protein localises to the mitochondrion inner membrane. Its function is as follows. Essential core component of the TIM22 complex, a complex that mediates the import and insertion of multi-pass transmembrane proteins into the mitochondrial inner membrane. In the TIM22 complex, it constitutes the voltage-activated and signal-gated channel. Forms a twin-pore translocase that uses the membrane potential as external driving force in 2 voltage-dependent steps. In Xenopus tropicalis (Western clawed frog), this protein is Mitochondrial import inner membrane translocase subunit Tim22 (timm22).